The primary structure comprises 520 residues: Probable alginate O-acetylase AlgI (520 aa).

10 consecutive transmembrane segments (helical) span residues 7–24 (VFLFLFLPVFLGLYYLSG), 39–61 (FYAWWRVDFLLLFAGVTVFNYWI), 78–100 (WLILGVVVDLCVLGYFKYANFGV), 115–137 (FVLTHILLPIGISFYTFESISYI), 150–172 (NLIDFAAFVAIFPHLIAGPVLRF), 239–261 (LYFDFSGYSDMAIGLGLMMGFRF), 311–333 (LFLTMLLGGLWHGANFTYIIWGA), 353–375 (VLNPLKWVITFLLVVIGWVIFRA), 402–424 (ANLTGLQVGTLVLAYLVLAFFGL), and 483–505 (WLSQLPVLATRLALLLLFAASVL). His322 is an active-site residue.

It belongs to the membrane-bound acyltransferase family.

The protein resides in the cell inner membrane. It functions in the pathway glycan biosynthesis; alginate biosynthesis. Functionally, together with AlgJ and AlgF, forms an inner membrane complex which probably interacts with the alginate polymerization-transport complex and adds acetyl groups at the O-2 and O-3 positions of mannuronate residues. Acetylation of alginate is important for the architecture of biofilms and increases resistance to opsonic killing in the host. In Pseudomonas aeruginosa (strain ATCC 15692 / DSM 22644 / CIP 104116 / JCM 14847 / LMG 12228 / 1C / PRS 101 / PAO1), this protein is Probable alginate O-acetylase AlgI (algI).